The sequence spans 282 residues: Putative peroxisomal biogenesis factor 19 (282 aa).

The segment at 73–95 (QEEAMKKAGADPSEGEGEQPLDP) is disordered. A Cysteine methyl ester modification is found at cysteine 279. A lipid anchor (S-farnesyl cysteine) is attached at cysteine 279. The propeptide at 280–282 (SIM) is removed in mature form.

The protein belongs to the peroxin-19 family.

The protein resides in the peroxisome. The sequence is that of Putative peroxisomal biogenesis factor 19 (prx-19) from Caenorhabditis elegans.